The sequence spans 609 residues: MAIASGSWVATVNHHANPHSFTSPTKPIFFLSQKPHNFHVCSSRCSMVLEEDEKKSPSPKEDKWPFFEPGPNDLNRVLSRFLRDPETRKLSSEFYEKAKENSELRTTKHLISYLVSSKSWDLLVSVCEDLREHKALPDGQTCSNLIRSCIRDRKFRITHCLLSVFRSDKSLAVSASDAAMKGFNKLQMYSSTIQVFDRLKQSVGVEPSPGCYCRIMEAHEKIGENHKVVELFQEFKSQRLSFLAKESGSIYTIVCSSLAKSGRAFEALEVLEEMKDKGIPESSELYSMLIRAFAEAREVVITEKLFKEAGGKKLLKDPEMCLKVVLMYVREGNMETTLEVVAAMRKAELKVTDCILCAIVNGFSKQRGFAEAVKVYEWAMKEECEAGQVTYAIAINAYCRLEKYNKAEMLFDEMVKKGFDKCVVAYSNIMDMYGKTRRLSDAVRLMAKMKQRGCKPNIWIYNSLIDMHGRAMDLRRAEKIWKEMKRAKVLPDKVSYTSMISAYNRSKELERCVELYQEFRMNRGKIDRAMAGIMVGVFSKTSRIDELMRLLQDMKVEGTRLDARLYSSALNALRDAGLNSQIRWLQESFDAAQTSTSKYSNTKNTGTLS.

Residues 1-44 (MAIASGSWVATVNHHANPHSFTSPTKPIFFLSQKPHNFHVCSSR) constitute a chloroplast transit peptide. 13 PPR repeats span residues 103-137 (ELRT…KALP), 138-168 (DGQT…FRSD), 172-207 (AVSA…GVEP), 208-242 (SPGC…RLSF), 247-281 (SGSI…GIPE), 282-316 (SSEL…KLLK), 317-351 (DPEM…ELKV), 352-386 (TDCI…ECEA), 387-421 (GQVT…GFDK), 422-456 (CVVA…GCKP), 457-491 (NIWI…KVLP), 492-526 (DKVS…RGKI), and 527-561 (DRAM…GTRL).

Belongs to the PPR family. P subfamily.

It localises to the plastid. The protein localises to the chloroplast. The protein is Pentatricopeptide repeat-containing protein At5g13770, chloroplastic of Arabidopsis thaliana (Mouse-ear cress).